Consider the following 364-residue polypeptide: DNA replication and repair protein RecF (364 aa).

ATP is bound at residue 30-37; sequence GDNAQGKT.

It belongs to the RecF family.

Its subcellular location is the cytoplasm. The RecF protein is involved in DNA metabolism; it is required for DNA replication and normal SOS inducibility. RecF binds preferentially to single-stranded, linear DNA. It also seems to bind ATP. This chain is DNA replication and repair protein RecF, found in Clostridium kluyveri (strain ATCC 8527 / DSM 555 / NBRC 12016 / NCIMB 10680 / K1).